A 257-amino-acid polypeptide reads, in one-letter code: MLAVLSPAKRLAARPALDLPADLAPSEPRLQDQADALARVARDLTAADLRRLMHISEPLARLNVARFAEFHEARNAAVPAVALFDGDTYAGLEARTMDADALRWAQERICILSGLYGLLRPLDRIQPHRLEMGTRLATERGVTLYDFWGDRIAEALNTRAAETGARVLVNCASVEYFTAADRAALKLPVITPTFLEERNGERKIVSFWAKRARGAMARFIAENRLNDPADLRAFRAGGYAYEPDLSTDERPVFLRAG.

It belongs to the UPF0246 family.

This is UPF0246 protein RSKD131_2757 from Cereibacter sphaeroides (strain KD131 / KCTC 12085) (Rhodobacter sphaeroides).